The sequence spans 160 residues: Transcription elongation factor GreA (160 aa).

The stretch at 2–81 forms a coiled coil; sequence AEKKNILTYE…KNAEVVVEDE (80 aa). Residues 36–55 are disordered; that stretch reads KEAREQGDLSENAEYDAAKD.

It belongs to the GreA/GreB family.

Functionally, necessary for efficient RNA polymerase transcription elongation past template-encoded arresting sites. The arresting sites in DNA have the property of trapping a certain fraction of elongating RNA polymerases that pass through, resulting in locked ternary complexes. Cleavage of the nascent transcript by cleavage factors such as GreA or GreB allows the resumption of elongation from the new 3'terminus. GreA releases sequences of 2 to 3 nucleotides. The sequence is that of Transcription elongation factor GreA from Lachnoclostridium phytofermentans (strain ATCC 700394 / DSM 18823 / ISDg) (Clostridium phytofermentans).